Consider the following 29-residue polypeptide: GDLPVCGETCFGGTCNTPGCVCAWPVCTR.

The cyclopeptide (Gly-Arg) cross-link spans Gly1–Arg29. Intrachain disulfides connect Cys6–Cys20, Cys10–Cys22, and Cys15–Cys27.

Post-translationally, this is a cyclic peptide.

Probably participates in a plant defense mechanism. This Psychotria leiocarpa protein is Cyclotide psyleio C.